Consider the following 349-residue polypeptide: ATP phosphoribosyltransferase regulatory subunit (349 aa).

Residues 325 to 349 (ANGRGRGVRPRRASARGGRAGTRPR) are disordered. A compositionally biased stretch (low complexity) spans 339 to 349 (ARGGRAGTRPR).

Belongs to the class-II aminoacyl-tRNA synthetase family. HisZ subfamily. In terms of assembly, heteromultimer composed of HisG and HisZ subunits.

The protein resides in the cytoplasm. It functions in the pathway amino-acid biosynthesis; L-histidine biosynthesis; L-histidine from 5-phospho-alpha-D-ribose 1-diphosphate: step 1/9. Its function is as follows. Required for the first step of histidine biosynthesis. May allow the feedback regulation of ATP phosphoribosyltransferase activity by histidine. The protein is ATP phosphoribosyltransferase regulatory subunit of Anaeromyxobacter dehalogenans (strain 2CP-C).